The following is a 546-amino-acid chain: Coatomer subunit delta (546 aa).

The interaction with DSL1 stretch occupies residues 190-440 (NRFMGSKDPN…VIFTIPVFPQ (251 aa)). The disordered stretch occupies residues 236 to 287 (PMATSQRAGHSATGGMKLGGGAGRRAGAAPRPSAISSASSGTPPPPEEDVPE). The segment covering 260–276 (RAGAAPRPSAISSASSG) has biased composition (low complexity). Threonine 277 is modified (phosphothreonine). Residues 288 to 546 (NNGILISIKE…SLKSDEYLVQ (259 aa)) enclose the MHD domain.

Belongs to the adaptor complexes medium subunit family. Delta-COP subfamily. In terms of assembly, oligomeric complex that consists of at least the alpha, beta, beta', gamma, delta, epsilon and zeta subunits. Interacts with DSL1.

Its subcellular location is the cytoplasm. The protein localises to the golgi apparatus membrane. It is found in the cytoplasmic vesicle. The protein resides in the COPI-coated vesicle membrane. Its function is as follows. The coatomer is a cytosolic protein complex that binds to dilysine motifs and reversibly associates with Golgi non-clathrin-coated vesicles, which further mediate biosynthetic protein transport from the ER, via the Golgi up to the trans Golgi network. Coatomer complex is required for budding from Golgi membranes, and is essential for the retrograde Golgi-to-ER transport of dilysine-tagged proteins. In Saccharomyces cerevisiae (strain ATCC 204508 / S288c) (Baker's yeast), this protein is Coatomer subunit delta (RET2).